The sequence spans 271 residues: Tryptophan synthase alpha chain (271 aa).

Residues Glu-56 and Asp-67 each act as proton acceptor in the active site.

This sequence belongs to the TrpA family. As to quaternary structure, tetramer of two alpha and two beta chains.

It carries out the reaction (1S,2R)-1-C-(indol-3-yl)glycerol 3-phosphate + L-serine = D-glyceraldehyde 3-phosphate + L-tryptophan + H2O. Its pathway is amino-acid biosynthesis; L-tryptophan biosynthesis; L-tryptophan from chorismate: step 5/5. The alpha subunit is responsible for the aldol cleavage of indoleglycerol phosphate to indole and glyceraldehyde 3-phosphate. The sequence is that of Tryptophan synthase alpha chain from Mycobacterium intracellulare.